The primary structure comprises 152 residues: Glycine cleavage system H protein, mitochondrial (152 aa).

The transit peptide at 1-31 directs the protein to the mitochondrion; sequence MALRMWASSTANALRLSSATRPHYSPLSRCF. In terms of domain architecture, Lipoyl-binding spans 53 to 135; sequence VATVGITDHA…YEDGWMIKVK (83 aa). Lys94 is subject to N6-lipoyllysine.

The protein belongs to the GcvH family. In terms of assembly, the glycine cleavage system is composed of four proteins: P, T, L and H. Requires (R)-lipoate as cofactor.

The protein resides in the mitochondrion. Its function is as follows. The glycine cleavage system catalyzes the degradation of glycine. The H protein shuttles the methylamine group of glycine from the P protein to the T protein. The polypeptide is Glycine cleavage system H protein, mitochondrial (GDCSH) (Flaveria pubescens (Yellowtops)).